We begin with the raw amino-acid sequence, 235 residues long: Probable pyridoxal 5'-phosphate synthase subunit PDX1 (235 aa).

Catalysis depends on lysine 16, which acts as the Schiff-base intermediate with D-ribose 5-phosphate. D-glyceraldehyde 3-phosphate is bound at residue arginine 104. D-ribose 5-phosphate-binding positions include glycine 153 and 174–175; that span reads GS.

It belongs to the PdxS/SNZ family.

The enzyme catalyses aldehydo-D-ribose 5-phosphate + D-glyceraldehyde 3-phosphate + L-glutamine = pyridoxal 5'-phosphate + L-glutamate + phosphate + 3 H2O + H(+). It participates in cofactor biosynthesis; pyridoxal 5'-phosphate biosynthesis. Its function is as follows. Catalyzes the formation of pyridoxal 5'-phosphate from ribose 5-phosphate (RBP), glyceraldehyde 3-phosphate (G3P) and ammonia. The ammonia is provided by PDX2. Can also use ribulose 5-phosphate and dihydroxyacetone phosphate as substrates, resulting from enzyme-catalyzed isomerization of RBP and G3P, respectively. Also plays an indirect role in resistance to singlet oxygen-generating photosensitizers. The polypeptide is Probable pyridoxal 5'-phosphate synthase subunit PDX1 (Stellaria longipes (Longstalk starwort)).